The primary structure comprises 113 residues: Nucleoid-associated protein Syncc9902_0023 (113 aa).

Belongs to the YbaB/EbfC family. As to quaternary structure, homodimer.

Its subcellular location is the cytoplasm. The protein localises to the nucleoid. Binds to DNA and alters its conformation. May be involved in regulation of gene expression, nucleoid organization and DNA protection. The protein is Nucleoid-associated protein Syncc9902_0023 of Synechococcus sp. (strain CC9902).